Here is a 396-residue protein sequence, read N- to C-terminus: Elongation factor Tu 2 (396 aa).

The tr-type G domain maps to 10 to 206 (KPHVNIGTIG…AVDSYIPTPQ (197 aa)). A G1 region spans residues 19 to 26 (GHVDHGKT). 19–26 (GHVDHGKT) contributes to the GTP binding site. Threonine 26 contacts Mg(2+). The interval 60-64 (GITIS) is G2. The segment at 81–84 (DCPG) is G3. Residues 81–85 (DCPGH) and 136–139 (NKVD) each bind GTP. The segment at 136-139 (NKVD) is G4. The segment at 174–176 (SAL) is G5.

Belongs to the TRAFAC class translation factor GTPase superfamily. Classic translation factor GTPase family. EF-Tu/EF-1A subfamily. As to quaternary structure, monomer.

Its subcellular location is the cytoplasm. The enzyme catalyses GTP + H2O = GDP + phosphate + H(+). GTP hydrolase that promotes the GTP-dependent binding of aminoacyl-tRNA to the A-site of ribosomes during protein biosynthesis. This chain is Elongation factor Tu 2, found in Myxococcus xanthus (strain DK1622).